The primary structure comprises 210 residues: Ribosomal RNA small subunit methyltransferase G (210 aa).

S-adenosyl-L-methionine contacts are provided by residues Gly76, Met81, 127-128 (VE), and Arg145.

The protein belongs to the methyltransferase superfamily. RNA methyltransferase RsmG family.

It is found in the cytoplasm. The enzyme catalyses guanosine(527) in 16S rRNA + S-adenosyl-L-methionine = N(7)-methylguanosine(527) in 16S rRNA + S-adenosyl-L-homocysteine. In terms of biological role, specifically methylates the N7 position of guanine in position 527 of 16S rRNA. The sequence is that of Ribosomal RNA small subunit methyltransferase G from Acinetobacter baumannii (strain AB307-0294).